A 463-amino-acid polypeptide reads, in one-letter code: Sodium-coupled neutral amino acid transporter 7 (463 aa).

S28 bears the Phosphoserine mark. A run of 11 helical transmembrane segments spans residues 56–76, 82–102, 130–150, 179–199, 206–226, 240–260, 283–303, 320–340, 372–392, 396–416, and 429–449; these read AVFI…PAAF, VAAG…GLVI, LCEV…LIII, FTIS…KEIG, FLSV…YIWP, ASWM…QCHV, AAMV…FLTF, VAVA…YPIL, VLQT…IPDI, ISVI…LCLI, and ASWW…AFIF.

The protein belongs to the amino acid/polyamine transporter 2 family. In terms of assembly, interacts with the mTORC1 complex; this interaction mediates the recruitment of mTORC1 to the lysosome and its subsequent activation. In terms of tissue distribution, highly expressed in the brain, including the hippocampus, especially in the granular layer of dentate gyrus cells and the pyramidal cell layer of the hippocampus, amygdala, thalamus, hypothalamus, in the layer of Purkinje cells in the cerebellum and the layers of cortex. Particularly strong expression in neurons of the ventromedial hypothalamus, basolateral amygdala, ventral tegmental area, and locus coeruleus. Not detected in glial cells, including astrocytes. In addition to brain, also expressed in the spinal cord (at protein level).

Its subcellular location is the lysosome membrane. The protein localises to the cell projection. It is found in the axon. The enzyme catalyses L-glutamine(in) + Na(+)(in) = L-glutamine(out) + Na(+)(out). The catalysed reaction is L-asparagine(in) + Na(+)(in) = L-asparagine(out) + Na(+)(out). Symporter that selectively cotransports sodium ions and amino acids, such as L-glutamine and L-asparagine from the lysosome into the cytoplasm and may participates in mTORC1 activation. The transport activity requires an acidic lysosomal lumen. The chain is Sodium-coupled neutral amino acid transporter 7 from Mus musculus (Mouse).